Consider the following 87-residue polypeptide: MTMTSEEVITLIDEEGVEHDFTVLDILEVDGTEYAILIPVDDEEQEDEVVIFKFTEDDEGNEILVEIEDDEWEKVADAWQEKVGREH.

It belongs to the UPF0473 family.

The chain is UPF0473 protein Daud_0916 from Desulforudis audaxviator (strain MP104C).